Consider the following 314-residue polypeptide: MDGTNGSTQTHFILLGFSDRPHLERILFVVILIAYLLTLVGNTTIILVSRLDPHLHTPMYFFLAHLSFLDLSFTTSSIPQLLYNLNGCDKTISYMGCAIQLFLFLGLGGVECLLLAVMAYDRCVAICKPLHYMVIMNPRLCRGLVSVTWGCGVANSLAMSPVTLRLPRCGHHEVDHFLREMPALIRMACVSTVAIEGTVFVLAVGVVLSPLVFILLSYSYIVRAVLQIRSASGRQKAFGTCGSHLTVVSLFYGNIIYMYMQPGASSSQDQGMFLMLFYNIVTPLLNPLIYTLRNREVKGALGRLLLGKRELGKE.

The Extracellular portion of the chain corresponds to 1–25; it reads MDGTNGSTQTHFILLGFSDRPHLER. N-linked (GlcNAc...) asparagine glycosylation is present at asparagine 5. A helical transmembrane segment spans residues 26 to 49; the sequence is ILFVVILIAYLLTLVGNTTIILVS. Residues 50–57 are Cytoplasmic-facing; the sequence is RLDPHLHT. A helical transmembrane segment spans residues 58–79; the sequence is PMYFFLAHLSFLDLSFTTSSIP. The Extracellular portion of the chain corresponds to 80-100; the sequence is QLLYNLNGCDKTISYMGCAIQ. A helical transmembrane segment spans residues 101–120; it reads LFLFLGLGGVECLLLAVMAY. Residues 121–139 lie on the Cytoplasmic side of the membrane; it reads DRCVAICKPLHYMVIMNPR. The chain crosses the membrane as a helical span at residues 140-158; sequence LCRGLVSVTWGCGVANSLA. Residues 159–195 are Extracellular-facing; sequence MSPVTLRLPRCGHHEVDHFLREMPALIRMACVSTVAI. Residues 196 to 219 traverse the membrane as a helical segment; sequence EGTVFVLAVGVVLSPLVFILLSYS. Residues 220 to 236 lie on the Cytoplasmic side of the membrane; the sequence is YIVRAVLQIRSASGRQK. The chain crosses the membrane as a helical span at residues 237 to 259; that stretch reads AFGTCGSHLTVVSLFYGNIIYMY. Over 260–272 the chain is Extracellular; it reads MQPGASSSQDQGM. Residues 273–292 form a helical membrane-spanning segment; that stretch reads FLMLFYNIVTPLLNPLIYTL. At 293 to 314 the chain is on the cytoplasmic side; sequence RNREVKGALGRLLLGKRELGKE.

Belongs to the G-protein coupled receptor 1 family.

It localises to the cell membrane. Functionally, odorant receptor. The polypeptide is Olfactory receptor 2W3 (OR2W3) (Homo sapiens (Human)).